A 472-amino-acid polypeptide reads, in one-letter code: MVIANSVKSSTTNYVVADISLSDFGRKEIKIAETEMPGLMALRDKYQSEKPLKGAKIAGSLHMTIQTAVLIETLVDLGAEVKWASCNIFSTQDHAAAAIADQGISVYAKKGETLDEYWQYTHCILDWGADSPNMILDDGGDATGLLILGSKAEKDLSVLDNPGNEEEIALFNSIKYKLETDSDFYSRIKSNIIGVTEETTTGVARLYQLQKQNALPFPAINVNDSVTKSKFDNLYGCRESLVDSIKRATDVMIAGKVALVMGFGDVGKGSAQSLRGLGAIVKVAEVDPICALQAAMEGFSVVTLDDVVEDIDIFVTATGNYQVITNKNLVKMKDEAIVCNIGHFDNEIDVASLKDYPWENIKPQVDHITLPSGNKIILLAEGRLVNLGCATGHPSFVMSNSFTNQVLAQIELFNKSEKYAKEVYVLPKHLDEMVARLHLDKIGAKLTKLTEEQADYINVSVEGPYKPELYRY.

Residues Thr-64, Asp-138, and Glu-198 each contribute to the substrate site. 199–201 (TTT) lines the NAD(+) pocket. Residues Lys-228 and Asp-232 each coordinate substrate. Residues Asn-233, 262–267 (GFGDVG), Glu-285, Asn-320, 341–343 (IGH), and Asn-386 contribute to the NAD(+) site.

Belongs to the adenosylhomocysteinase family. NAD(+) is required as a cofactor.

Its subcellular location is the cytoplasm. It carries out the reaction S-adenosyl-L-homocysteine + H2O = L-homocysteine + adenosine. It functions in the pathway amino-acid biosynthesis; L-homocysteine biosynthesis; L-homocysteine from S-adenosyl-L-homocysteine: step 1/1. Functionally, may play a key role in the regulation of the intracellular concentration of adenosylhomocysteine. The chain is Adenosylhomocysteinase from Prochlorococcus marinus (strain MIT 9312).